The chain runs to 493 residues: ATP synthase subunit beta, chloroplastic (493 aa).

170 to 177 (GGAGVGKT) is an ATP binding site.

The protein belongs to the ATPase alpha/beta chains family. F-type ATPases have 2 components, CF(1) - the catalytic core - and CF(0) - the membrane proton channel. CF(1) has five subunits: alpha(3), beta(3), gamma(1), delta(1), epsilon(1). CF(0) has four main subunits: a(1), b(1), b'(1) and c(9-12).

It localises to the plastid. The protein resides in the chloroplast thylakoid membrane. The catalysed reaction is ATP + H2O + 4 H(+)(in) = ADP + phosphate + 5 H(+)(out). Produces ATP from ADP in the presence of a proton gradient across the membrane. The catalytic sites are hosted primarily by the beta subunits. This Adiantum capillus-veneris (Maidenhair fern) protein is ATP synthase subunit beta, chloroplastic.